Consider the following 66-residue polypeptide: uncharacterized protein (66 aa).

This is an uncharacterized protein from Enterobacteria phage T4 (Bacteriophage T4).